We begin with the raw amino-acid sequence, 317 residues long: Beta-ketoacyl-[acyl-carrier-protein] synthase III (317 aa).

Active-site residues include C112 and H244. The tract at residues 245-249 is ACP-binding; the sequence is QANLR. N274 is an active-site residue.

The protein belongs to the thiolase-like superfamily. FabH family. As to quaternary structure, homodimer.

It localises to the cytoplasm. The catalysed reaction is malonyl-[ACP] + acetyl-CoA + H(+) = 3-oxobutanoyl-[ACP] + CO2 + CoA. Its pathway is lipid metabolism; fatty acid biosynthesis. Catalyzes the condensation reaction of fatty acid synthesis by the addition to an acyl acceptor of two carbons from malonyl-ACP. Catalyzes the first condensation reaction which initiates fatty acid synthesis and may therefore play a role in governing the total rate of fatty acid production. Possesses both acetoacetyl-ACP synthase and acetyl transacylase activities. Its substrate specificity determines the biosynthesis of branched-chain and/or straight-chain of fatty acids. The sequence is that of Beta-ketoacyl-[acyl-carrier-protein] synthase III from Enterobacter sp. (strain 638).